Here is a 498-residue protein sequence, read N- to C-terminus: Zinc finger protein 79 (498 aa).

Positions 1 to 23 (MLEEGVLPSPGPALPQEENTGEE) are disordered. A KRAB domain is found at 38 to 109 (TFFSSVTVAF…EGEDLRSPSP (72 aa)). 11 consecutive C2H2-type zinc fingers follow at residues 193–215 (YACNECGKAFSYCSSLSQHQKSH), 221–243 (YECSECGKAFSQSSSLIQHQRIH), 249–271 (YKCSECGRAFSQNANLTKHQRTH), 277–299 (YRCSECEKAFSDCSALVQHQRIH), 305–327 (YECSDCGKAFRHSANLTNHQRTH), 333–355 (YKCSECGKAFSYCAAFIQHQRIH), 361–383 (YRCAACGKAFSQSANLTNHQRTH), 389–411 (YKCSECGKAFSQSTNLIIHQKTH), 417–439 (YKCNECGKFFSESSALIRHHIIH), 445–467 (YECNECGKAFNQSSSLSQHQRIH), and 473–495 (YECSECGKAFRCSSAFVRHQRLH).

It belongs to the krueppel C2H2-type zinc-finger protein family.

The protein resides in the nucleus. Functionally, may be involved in transcriptional regulation. This chain is Zinc finger protein 79 (ZNF79), found in Homo sapiens (Human).